Here is a 911-residue protein sequence, read N- to C-terminus: Protein translocase subunit SecA (911 aa).

Residues Gln87, 105–109, and Asp510 contribute to the ATP site; that span reads GEGKT. Zn(2+) is bound by residues Cys896, Cys898, Cys907, and His908.

Belongs to the SecA family. As to quaternary structure, monomer and homodimer. Part of the essential Sec protein translocation apparatus which comprises SecA, SecYEG and auxiliary proteins SecDF-YajC and YidC. The cofactor is Zn(2+).

It localises to the cell inner membrane. It is found in the cytoplasm. It catalyses the reaction ATP + H2O + cellular proteinSide 1 = ADP + phosphate + cellular proteinSide 2.. Part of the Sec protein translocase complex. Interacts with the SecYEG preprotein conducting channel. Has a central role in coupling the hydrolysis of ATP to the transfer of proteins into and across the cell membrane, serving both as a receptor for the preprotein-SecB complex and as an ATP-driven molecular motor driving the stepwise translocation of polypeptide chains across the membrane. This chain is Protein translocase subunit SecA, found in Acinetobacter baumannii (strain SDF).